A 384-amino-acid chain; its full sequence is Probable tRNA sulfurtransferase (384 aa).

Positions 57–160 constitute a THUMP domain; that stretch reads EEVVDRVRNV…KKTYIYSKRI (104 aa). ATP-binding positions include 177–178, 202–203, Arg259, Gly281, and Gln290; these read ML and YF.

The protein belongs to the ThiI family.

It localises to the cytoplasm. It catalyses the reaction [ThiI sulfur-carrier protein]-S-sulfanyl-L-cysteine + a uridine in tRNA + 2 reduced [2Fe-2S]-[ferredoxin] + ATP + H(+) = [ThiI sulfur-carrier protein]-L-cysteine + a 4-thiouridine in tRNA + 2 oxidized [2Fe-2S]-[ferredoxin] + AMP + diphosphate. It carries out the reaction [ThiS sulfur-carrier protein]-C-terminal Gly-Gly-AMP + S-sulfanyl-L-cysteinyl-[cysteine desulfurase] + AH2 = [ThiS sulfur-carrier protein]-C-terminal-Gly-aminoethanethioate + L-cysteinyl-[cysteine desulfurase] + A + AMP + 2 H(+). The protein operates within cofactor biosynthesis; thiamine diphosphate biosynthesis. In terms of biological role, catalyzes the ATP-dependent transfer of a sulfur to tRNA to produce 4-thiouridine in position 8 of tRNAs, which functions as a near-UV photosensor. Also catalyzes the transfer of sulfur to the sulfur carrier protein ThiS, forming ThiS-thiocarboxylate. This is a step in the synthesis of thiazole, in the thiamine biosynthesis pathway. The sulfur is donated as persulfide by IscS. The protein is Probable tRNA sulfurtransferase of Clostridium acetobutylicum (strain ATCC 824 / DSM 792 / JCM 1419 / IAM 19013 / LMG 5710 / NBRC 13948 / NRRL B-527 / VKM B-1787 / 2291 / W).